The primary structure comprises 273 residues: Shikimate dehydrogenase (NADP(+)) (273 aa).

Residues 19-21 (SQS) and Thr66 contribute to the shikimate site. Residue Lys70 is the Proton acceptor of the active site. Position 82 (Glu82) interacts with NADP(+). 2 residues coordinate shikimate: Asn91 and Asp107. NADP(+)-binding positions include 131–135 (GAGGA) and Met217. Tyr219 provides a ligand contact to shikimate. Position 241 (Gly241) interacts with NADP(+).

It belongs to the shikimate dehydrogenase family. In terms of assembly, homodimer.

It catalyses the reaction shikimate + NADP(+) = 3-dehydroshikimate + NADPH + H(+). It participates in metabolic intermediate biosynthesis; chorismate biosynthesis; chorismate from D-erythrose 4-phosphate and phosphoenolpyruvate: step 4/7. Functionally, involved in the biosynthesis of the chorismate, which leads to the biosynthesis of aromatic amino acids. Catalyzes the reversible NADPH linked reduction of 3-dehydroshikimate (DHSA) to yield shikimate (SA). In Buchnera aphidicola subsp. Schizaphis graminum (strain Sg), this protein is Shikimate dehydrogenase (NADP(+)).